An 831-amino-acid chain; its full sequence is DNA ligase (831 aa).

Residues 34–38, 83–84, and Glu114 each bind NAD(+); these read DADYD and SL. Lys116 functions as the N6-AMP-lysine intermediate in the catalytic mechanism. Residues Arg137, Glu174, Lys291, and Lys315 each coordinate NAD(+). 4 residues coordinate Zn(2+): Cys409, Cys412, Cys427, and Cys433. A BRCT domain is found at 749–831; the sequence is AHTAPLNGQS…LAFLEQYSAQ (83 aa).

Belongs to the NAD-dependent DNA ligase family. LigA subfamily. Mg(2+) is required as a cofactor. It depends on Mn(2+) as a cofactor.

It catalyses the reaction NAD(+) + (deoxyribonucleotide)n-3'-hydroxyl + 5'-phospho-(deoxyribonucleotide)m = (deoxyribonucleotide)n+m + AMP + beta-nicotinamide D-nucleotide.. Its function is as follows. DNA ligase that catalyzes the formation of phosphodiester linkages between 5'-phosphoryl and 3'-hydroxyl groups in double-stranded DNA using NAD as a coenzyme and as the energy source for the reaction. It is essential for DNA replication and repair of damaged DNA. The protein is DNA ligase of Xylella fastidiosa (strain M23).